Reading from the N-terminus, the 171-residue chain is 3-hydroxydecanoyl-[acyl-carrier-protein] dehydratase (171 aa).

Histidine 70 is a catalytic residue.

The protein belongs to the thioester dehydratase family. FabA subfamily. As to quaternary structure, homodimer.

The protein resides in the cytoplasm. The enzyme catalyses a (3R)-hydroxyacyl-[ACP] = a (2E)-enoyl-[ACP] + H2O. The catalysed reaction is (3R)-hydroxydecanoyl-[ACP] = (2E)-decenoyl-[ACP] + H2O. It catalyses the reaction (2E)-decenoyl-[ACP] = (3Z)-decenoyl-[ACP]. Its pathway is lipid metabolism; fatty acid biosynthesis. Necessary for the introduction of cis unsaturation into fatty acids. Catalyzes the dehydration of (3R)-3-hydroxydecanoyl-ACP to E-(2)-decenoyl-ACP and then its isomerization to Z-(3)-decenoyl-ACP. Can catalyze the dehydratase reaction for beta-hydroxyacyl-ACPs with saturated chain lengths up to 16:0, being most active on intermediate chain length. The sequence is that of 3-hydroxydecanoyl-[acyl-carrier-protein] dehydratase from Marinomonas sp. (strain MWYL1).